We begin with the raw amino-acid sequence, 445 residues long: D-serine dehydratase (445 aa).

Position 118 is an N6-(pyridoxal phosphate)lysine (Lys-118).

The protein belongs to the serine/threonine dehydratase family. DsdA subfamily. Monomer. It depends on pyridoxal 5'-phosphate as a cofactor.

The catalysed reaction is D-serine = pyruvate + NH4(+). The polypeptide is D-serine dehydratase (Serratia proteamaculans (strain 568)).